Consider the following 460-residue polypeptide: NADH-ubiquinone oxidoreductase chain 4 (460 aa).

Helical transmembrane passes span 20-42 (PKWLWTTTTAHSLLIASISLMWF), 61-81 (PLSTPLLVLTCWLLPLMILAS), 93-113 (QRLYITLLASLQTFLIMAFGA), 114-134 (TEIIMFYIMFEATLIPTLIII), 148-168 (TYFLFYTLAGSLPLLVALLLL), 195-215 (IWWAACLIAFLVKMPLYGVHL), 225-245 (PVAGSMVLAAVLLKLGGYGMM), 258-278 (LAYPFIILALWGIIMTGSICL), 285-304 (SLIAYSSVSHMGLVAGGILI), 308-330 (WGFSGAIILMIAHGLVSSALFCL), 351-371 (IIFPLTAVWWFIANLANLALP), and 394-414 (ILLTGLGTLITAGYSLYMFLM).

Belongs to the complex I subunit 4 family.

It is found in the mitochondrion membrane. The catalysed reaction is a ubiquinone + NADH + 5 H(+)(in) = a ubiquinol + NAD(+) + 4 H(+)(out). In terms of biological role, core subunit of the mitochondrial membrane respiratory chain NADH dehydrogenase (Complex I) that is believed to belong to the minimal assembly required for catalysis. Complex I functions in the transfer of electrons from NADH to the respiratory chain. The immediate electron acceptor for the enzyme is believed to be ubiquinone. The polypeptide is NADH-ubiquinone oxidoreductase chain 4 (MT-ND4) (Carassius auratus (Goldfish)).